The following is a 347-amino-acid chain: tRNA pseudouridine synthase D (347 aa).

D81 functions as the Nucleophile in the catalytic mechanism. The 147-residue stretch at 158-304 (GVPNYFGNQR…MRHDRRAIAL (147 aa)) folds into the TRUD domain.

The protein belongs to the pseudouridine synthase TruD family.

The enzyme catalyses uridine(13) in tRNA = pseudouridine(13) in tRNA. Functionally, responsible for synthesis of pseudouridine from uracil-13 in transfer RNAs. The polypeptide is tRNA pseudouridine synthase D (Vibrio vulnificus (strain CMCP6)).